We begin with the raw amino-acid sequence, 550 residues long: MVPTRSTARMLANLKIRTGMFWVLSLFSLTLLFSTASAWWAALGSDQQITELDQTAHQSDRLNNALLMAIRSSANVSSGFIEQLGGHDESAGKRMALSVELNNKSQALVDEFVENAREPALRGLATELQATFAEYAKAVAGQREATRQRSLEQYFKVNSDAGNAMGRLQTLRQQLVTTLSERGQQIMLESDRRLARAQLLSLCLLGVTVVLAVLCWAFIAQRVLHPLREAGGHFRRIASGDLSVPVQGQGNNEIGQLFHELQRMQQSQRDTLGQINNCARQLDAAATALNAVTEESANNLRQQGQELEQAATAVTEMTTAVEEVARNAITTSQTTSESNQLAAQSRRQVSENIDGTEAMTREIQTSSAHLQQLVGQVRDIGKVLEVIRSVSEQTNLLALNAAIEAARAGEAGRGFAVVADEVRTLAYRTQQSTQEIEQMIGSVQAGTEAAVASMQASTNRAQSTLDVTLASGQVLEGIYSAIGEINERNLVIASAAEEQAQVAREVDRNLLNIRELSNHSAAGAQQTSEASKALSGLVGEMTALVGRFKV.

The Cytoplasmic segment spans residues 1–19 (MVPTRSTARMLANLKIRTG). A helical transmembrane segment spans residues 20–40 (MFWVLSLFSLTLLFSTASAWW). At 41 to 198 (AALGSDQQIT…ESDRRLARAQ (158 aa)) the chain is on the periplasmic side. Residues 44-196 (GSDQQITELD…MLESDRRLAR (153 aa)) are ligand-binding domain. The benzoate site is built by arginine 71 and asparagine 75. Positions 71, 75, and 135 each coordinate salicylate. Residue 71-78 (RSSANVSS) participates in 3,4-dihydroxybenzoate binding. Residues 71–78 (RSSANVSS), tyrosine 135, glutamine 142, and asparagine 158 each bind L-quinate. Glutamine 169 serves as a coordination point for 3,4-dihydroxybenzoate. Residues 199–219 (LLSLCLLGVTVVLAVLCWAFI) traverse the membrane as a helical segment. Residues 220–550 (AQRVLHPLRE…MTALVGRFKV (331 aa)) lie on the Cytoplasmic side of the membrane. An HAMP domain is found at 221 to 273 (QRVLHPLREAGGHFRRIASGDLSVPVQGQGNNEIGQLFHELQRMQQSQRDTLG). The Methyl-accepting transducer domain maps to 278 to 514 (CARQLDAAAT…EVDRNLLNIR (237 aa)).

Belongs to the methyl-accepting chemotaxis (MCP) protein family. In terms of assembly, ligand free PcaY_PP-ligand-binding domain (LBD) is present in a monomer-dimer equilibrium. Only the dimeric LBD is able to bind ligands which in turn causes dimer stabilization.

It is found in the cell inner membrane. In terms of biological role, chemotactic-signal transducers respond to changes in the concentration of attractants and repellents in the environment, transduce a signal from the outside to the inside of the cell, and facilitate sensory adaptation through the variation of the level of methylation. PcaY recognizes a wide range of compounds containing a C6-membered ring with a carboxylate group. Binds preferentially compounds that serve as carbon sources and among them those that rapidly promote growth. Tightest binding compounds are quinate, shikimate, 3-dehydroshikimate and protocatechuate, which are at the interception of the biosynthetic shikimate and catabolic quinate pathways. This chain is Methyl-accepting chemotaxis protein PcaY, found in Pseudomonas putida (strain ATCC 47054 / DSM 6125 / CFBP 8728 / NCIMB 11950 / KT2440).